A 60-amino-acid polypeptide reads, in one-letter code: Large ribosomal subunit protein bL32 (60 aa).

Residues 1-20 (MAKPARHTSKAKRNKRRTHY) show a composition bias toward basic residues. Residues 1–22 (MAKPARHTSKAKRNKRRTHYKL) are disordered.

This sequence belongs to the bacterial ribosomal protein bL32 family.

The protein is Large ribosomal subunit protein bL32 of Streptococcus agalactiae serotype V (strain ATCC BAA-611 / 2603 V/R).